Here is a 661-residue protein sequence, read N- to C-terminus: Galactan 5-O-arabinofuranosyltransferase (661 aa).

A run of 13 helical transmembrane segments spans residues 26–46 (LVAI…LWMG), 64–84 (VASA…WLWL), 108–128 (ALTY…VLAI), 194–214 (AFQP…VPVW), 217–237 (ITGS…IILA), 243–263 (PYAA…SRIA), 265–285 (GDKF…TFYT), 286–306 (LFTG…AAIV), 312–332 (PLLW…ISWG), 362–382 (VPFL…IYLV), 393–413 (MWVG…ITLL), 418–438 (LGFR…VLGI), and 458–478 (TATH…LYYA).

Belongs to the glycosyltransferase 85 family.

It localises to the cell membrane. The enzyme catalyses Adds an alpha-D-arabinofuranosyl group from trans,octacis-decaprenylphospho-beta-D-arabinofuranose at the 5-O-position of the eighth, tenth and twelfth galactofuranose unit of the galactofuranan chain of [beta-D-galactofuranosyl-(1-&gt;5)-beta-D-galactofuranosyl-(1-&gt;6)]14-beta-D-galactofuranosyl-(1-&gt;5)-beta-D-galactofuranosyl-(1-&gt;4)-alpha-L-rhamnopyranosyl-(1-&gt;3)-N-acetyl-alpha-D-glucosaminyl-diphospho-trans,octacis-decaprenol.. It functions in the pathway cell wall biogenesis; cell wall polysaccharide biosynthesis. In terms of biological role, involved in the biosynthesis of the arabinogalactan (AG) region of the mycolylarabinogalactan-peptidoglycan (mAGP) complex, an essential component of the cell wall. Catalyzes the addition of the first key arabinofuranosyl (Araf) residue from the sugar donor decaprenyl-phospho-arabinose (DPA) on the C-5 of a 6-linked galactofuranosyl (Galf) of the galactan domain, thus 'priming' the galactan for further elaboration by other arabinofuranosyltransferases. The polypeptide is Galactan 5-O-arabinofuranosyltransferase (Corynebacterium glutamicum (strain ATCC 13032 / DSM 20300 / JCM 1318 / BCRC 11384 / CCUG 27702 / LMG 3730 / NBRC 12168 / NCIMB 10025 / NRRL B-2784 / 534)).